A 200-amino-acid chain; its full sequence is ATP synthase subunit b 1 (200 aa).

The chain crosses the membrane as a helical span at residues 14-34 (AAVIVVVSLMAFCCAGFAVAA).

Belongs to the ATPase B chain family. F-type ATPases have 2 components, F(1) - the catalytic core - and F(0) - the membrane proton channel. F(1) has five subunits: alpha(3), beta(3), gamma(1), delta(1), epsilon(1). F(0) has three main subunits: a(1), b(2) and c(10-14). The alpha and beta chains form an alternating ring which encloses part of the gamma chain. F(1) is attached to F(0) by a central stalk formed by the gamma and epsilon chains, while a peripheral stalk is formed by the delta and b chains.

It localises to the cell inner membrane. F(1)F(0) ATP synthase produces ATP from ADP in the presence of a proton or sodium gradient. F-type ATPases consist of two structural domains, F(1) containing the extramembraneous catalytic core and F(0) containing the membrane proton channel, linked together by a central stalk and a peripheral stalk. During catalysis, ATP synthesis in the catalytic domain of F(1) is coupled via a rotary mechanism of the central stalk subunits to proton translocation. Its function is as follows. Component of the F(0) channel, it forms part of the peripheral stalk, linking F(1) to F(0). This chain is ATP synthase subunit b 1, found in Desulfosudis oleivorans (strain DSM 6200 / JCM 39069 / Hxd3) (Desulfococcus oleovorans).